The chain runs to 469 residues: Dynein axonemal assembly factor 11 (469 aa).

4 LRR repeats span residues 20–43 (IFSLEEISLHQQDLERIEHIDKWC), 44–65 (RELKILYLQNNLIGKIENVSKL), 66–89 (KKLEYLNLALNNIEKIENLEGCES), and 90–110 (LQKLDLTVNFVGELSSINSLQ). The LRRCT domain occupies 114-135 (HLRELYLVGNPCAEYEGYRQYV). Composition is skewed to basic and acidic residues over residues 179–213 (KRAAEREEARSKLQGKQKESRKTQEKKPGFDRRWY) and 261–286 (SRLETHRYLEEKRKSKESSSEGELKK). Disordered stretches follow at residues 179-290 (KRAA…KPPR) and 436-469 (KTQAQGPLQFHKNKVKDTEDSEDFIDNTDVPPLM).

Belongs to the tilB family.

The protein localises to the cytoplasm. The protein resides in the cell projection. It localises to the cilium. Its subcellular location is the dynein axonemal particle. It is found in the flagellum. Involved in dynein arm assembly, is important for expression and transporting outer dynein arm (ODA) proteins from the cytoplasm to the cilia. The sequence is that of Dynein axonemal assembly factor 11 (dnaaf11) from Xenopus laevis (African clawed frog).